The chain runs to 891 residues: DNA polymerase I (891 aa).

The region spanning 1–313 (MEQPVIKEGT…LLDNTPALDN (313 aa)) is the 5'-3' exonuclease domain. The region spanning 314–488 (TPKKSCMIVL…RLCEYFEKGG (175 aa)) is the 3'-5' exonuclease domain. The interval 492 to 890 (NLLSLAREIE…FIAKRWNELK (399 aa)) is polymerase.

The protein belongs to the DNA polymerase type-A family. Single-chain monomer with multiple functions.

It catalyses the reaction DNA(n) + a 2'-deoxyribonucleoside 5'-triphosphate = DNA(n+1) + diphosphate. In addition to polymerase activity, this DNA polymerase exhibits 3'-5' and 5'-3' exonuclease activity. This Helicobacter pylori (strain ATCC 700392 / 26695) (Campylobacter pylori) protein is DNA polymerase I (polA).